The primary structure comprises 279 residues: Probable endonuclease 4 (279 aa).

The Zn(2+) site is built by histidine 74, histidine 112, glutamate 147, aspartate 180, histidine 183, histidine 214, aspartate 227, histidine 229, and glutamate 259.

Belongs to the AP endonuclease 2 family. Zn(2+) serves as cofactor.

The enzyme catalyses Endonucleolytic cleavage to 5'-phosphooligonucleotide end-products.. In terms of biological role, endonuclease IV plays a role in DNA repair. It cleaves phosphodiester bonds at apurinic or apyrimidinic (AP) sites, generating a 3'-hydroxyl group and a 5'-terminal sugar phosphate. This is Probable endonuclease 4 from Mycoplasma mobile (strain ATCC 43663 / 163K / NCTC 11711) (Mesomycoplasma mobile).